Consider the following 310-residue polypeptide: Syntaxin-81 (310 aa).

Topologically, residues 1–289 are cytoplasmic; it reads MSRFRDRTED…QAIQRNSSSR (289 aa). Residues 77-114 adopt a coiled-coil conformation; that stretch reads RTTEQEKDSIEQEVAAFIKACKEQIDILINSIRNEEAN. The helical; Anchor for type IV membrane protein transmembrane segment at 290-310 threads the bilayer; the sequence is TFLLLFFFVLTFSVLFLDWYS.

It belongs to the syntaxin family. Part of the t-SNARE complex. Interacts with MAG2.

It localises to the membrane. Vesicle trafficking protein that functions in the secretory pathway. The chain is Syntaxin-81 (SYP81) from Arabidopsis thaliana (Mouse-ear cress).